A 126-amino-acid polypeptide reads, in one-letter code: Small ribosomal subunit protein uS12 (126 aa).

The segment at 1–28 is disordered; the sequence is MPTIQQLIRSERSKVQKKTKSPALKQCP. Asp89 bears the 3-methylthioaspartic acid mark. The interval 104–126 is disordered; the sequence is ATGVKDRKQGRSKYGTKREKAKK. Over residues 113–126 the composition is skewed to basic residues; sequence GRSKYGTKREKAKK.

Belongs to the universal ribosomal protein uS12 family. In terms of assembly, part of the 30S ribosomal subunit. Contacts proteins S8 and S17. May interact with IF1 in the 30S initiation complex.

Its function is as follows. With S4 and S5 plays an important role in translational accuracy. In terms of biological role, interacts with and stabilizes bases of the 16S rRNA that are involved in tRNA selection in the A site and with the mRNA backbone. Located at the interface of the 30S and 50S subunits, it traverses the body of the 30S subunit contacting proteins on the other side and probably holding the rRNA structure together. The combined cluster of proteins S8, S12 and S17 appears to hold together the shoulder and platform of the 30S subunit. In Synechocystis sp. (strain ATCC 27184 / PCC 6803 / Kazusa), this protein is Small ribosomal subunit protein uS12.